Consider the following 215-residue polypeptide: Cytochrome b6 (215 aa).

A helical transmembrane segment spans residues 32–52; the sequence is IFYCLGGITFTSFLVQVATGF. Cys35 serves as a coordination point for heme c. Residues His86 and His100 each coordinate heme b. 3 consecutive transmembrane segments (helical) span residues 90-110, 116-136, and 186-206; these read ASMM…TGGF, LTWV…VTGY, and LHTF…FLMI. 2 residues coordinate heme b: His187 and His202.

It belongs to the cytochrome b family. PetB subfamily. In terms of assembly, the 4 large subunits of the cytochrome b6-f complex are cytochrome b6, subunit IV (17 kDa polypeptide, PetD), cytochrome f and the Rieske protein, while the 4 small subunits are PetG, PetL, PetM and PetN. The complex functions as a dimer. Heme b serves as cofactor. Requires heme c as cofactor.

It is found in the plastid. The protein localises to the chloroplast thylakoid membrane. Functionally, component of the cytochrome b6-f complex, which mediates electron transfer between photosystem II (PSII) and photosystem I (PSI), cyclic electron flow around PSI, and state transitions. This is Cytochrome b6 from Oltmannsiellopsis viridis (Marine flagellate).